The sequence spans 515 residues: Histidine ammonia-lyase (515 aa).

Positions 142–144 (ASG) form a cross-link, 5-imidazolinone (Ala-Gly). A 2,3-didehydroalanine (Ser) modification is found at Ser143.

It belongs to the PAL/histidase family. In terms of processing, contains an active site 4-methylidene-imidazol-5-one (MIO), which is formed autocatalytically by cyclization and dehydration of residues Ala-Ser-Gly.

It localises to the cytoplasm. It catalyses the reaction L-histidine = trans-urocanate + NH4(+). Its pathway is amino-acid degradation; L-histidine degradation into L-glutamate; N-formimidoyl-L-glutamate from L-histidine: step 1/3. This Bradyrhizobium sp. (strain ORS 278) protein is Histidine ammonia-lyase.